The sequence spans 106 residues: Transcription factor TRY (106 aa).

Residues 34-71 (TEQEEDLIFRMYRLVGDRWDLIAGRVPGRQPEEIERYW) enclose the Myb-like domain. Positions 83–106 (RRQLHSSSHKHTKPHRPRFSIYPS) are disordered. The span at 84-100 (RQLHSSSHKHTKPHRPR) shows a compositional bias: basic residues.

As to quaternary structure, interacts with GL3 and thus prevents GL1 GL3 interaction. Also interacts with BHLH2. Expressed in roots, leaves, siliques and inflorescences.

The protein resides in the nucleus. Transcription factor. Involved in epidermal cell fate specification. Negative regulator of trichome development, including endoreplication, by lateral inhibition involving intercellular interactions. Promotes the formation of hair developing cells (trichoblasts) in H position in root epidermis, probably by inhibiting non-hair cell (atrichoblasts) formation. The sequence is that of Transcription factor TRY (TRY) from Arabidopsis thaliana (Mouse-ear cress).